The chain runs to 354 residues: CX3C chemokine receptor 1 (354 aa).

Over 1 to 32 (MPTSFPELDLENFEYDDSAEACYLGDIVAFGT) the chain is Extracellular. A helical transmembrane segment spans residues 33-60 (IFLSIFYSLVFTFGLVGNLLVVLALTNS). Residues 61-70 (RKSKSITDIY) are Cytoplasmic-facing. A helical transmembrane segment spans residues 71-91 (LLNLALSDLLFVATLPFWTHY). The Extracellular segment spans residues 92 to 104 (LISHEGLHNAMCK). Cysteine 103 and cysteine 176 are disulfide-bonded. Residues 105–126 (LTTAFFFIGFFGGIFFITVISI) form a helical membrane-spanning segment. Residues 127 to 143 (DRYLAIVLAANSMNNRT) lie on the Cytoplasmic side of the membrane. The chain crosses the membrane as a helical span at residues 144-168 (VQHGVTISLGVWAAAILVASPQFMF). The Extracellular portion of the chain corresponds to 169-196 (TKRKDNECLGDYPEVLQEIWPVLRNSEV). Residues 197-216 (NILGFVLPLLIMSFCYFRIV) form a helical membrane-spanning segment. Residues 217 to 232 (RTLFSCKNRKKARAIR) lie on the Cytoplasmic side of the membrane. The chain crosses the membrane as a helical span at residues 233 to 257 (LILLVVVVFFLFWTPYNIVIFLETL). Topologically, residues 258–274 (KFYNFFPSCGMKRDLRW) are extracellular. A helical transmembrane segment spans residues 275–298 (ALSVTETVAFSHCCLNPFIYAFAG). At 299–354 (EKFRRYLRHLYNKCLAVLCGRPVHAGFSTESQRSRQDSILSSLTHYTSEGEGSLLL) the chain is on the cytoplasmic side. Threonine 345 carries the phosphothreonine modification.

It belongs to the G-protein coupled receptor 1 family. Found in a ternary complex with CX3CL1 and ITGAV:ITGB3 or ITGA4:ITGB1. Post-translationally, this protein is not N-glycosylated which is unusual for G-protein-coupled receptors. Most abundant in adult spinal cord, brain, kidney, gut, uterus and testes.

It is found in the cell membrane. Its function is as follows. Receptor for the C-X3-C chemokine fractalkine (CX3CL1) present on many early leukocyte cells; CX3CR1-CX3CL1 signaling exerts distinct functions in different tissue compartments, such as immune response, inflammation, cell adhesion and chemotaxis. CX3CR1-CX3CL1 signaling mediates cell migratory functions. Responsible for the recruitment of natural killer (NK) cells to inflamed tissues. Acts as a regulator of inflammation process leading to atherogenesis by mediating macrophage and monocyte recruitment to inflamed atherosclerotic plaques, promoting cell survival. Involved in airway inflammation by promoting interleukin 2-producing T helper (Th2) cell survival in inflamed lung. Involved in the migration of circulating monocytes to non-inflamed tissues, where they differentiate into macrophages and dendritic cells. Acts as a negative regulator of angiogenesis, probably by promoting macrophage chemotaxis. Plays a key role in brain microglia by regulating inflammatory response in the central nervous system (CNS) and regulating synapse maturation. Required to restrain the microglial inflammatory response in the CNS and the resulting parenchymal damage in response to pathological stimuli. Involved in brain development by participating in synaptic pruning, a natural process during which brain microglia eliminates extra synapses during postnatal development. Synaptic pruning by microglia is required to promote the maturation of circuit connectivity during brain development. Acts as an important regulator of the gut microbiota by controlling immunity to intestinal bacteria and fungi. Expressed in lamina propria dendritic cells in the small intestine, which form transepithelial dendrites capable of taking up bacteria in order to provide defense against pathogenic bacteria. Required to initiate innate and adaptive immune responses against dissemination of commensal fungi (mycobiota) component of the gut: expressed in mononuclear phagocytes (MNPs) and acts by promoting induction of antifungal IgG antibodies response to confer protection against disseminated C.albicans or C.auris infection. Also acts as a receptor for C-C motif chemokine CCL26, inducing cell chemotaxis. The protein is CX3C chemokine receptor 1 of Rattus norvegicus (Rat).